We begin with the raw amino-acid sequence, 205 residues long: Ypt/Rab-type GTPase ypt7 (205 aa).

GTP contacts are provided by residues 17–23 (SGVGKTS), 33–40 (FSASYKAT), glycine 66, 125–128 (NKID), and 157–159 (SAK). Residues 37 to 45 (YKATIGADF) carry the Effector region motif. Residues cysteine 203 and cysteine 205 are each lipidated (S-geranylgeranyl cysteine). A Cysteine methyl ester modification is found at cysteine 205.

Belongs to the small GTPase superfamily. Rab family. As to quaternary structure, interacts with the Rab GDP dissociation inhibitor GDI1.

It is found in the vacuole. Rab activation is generally mediated by a guanine exchange factor (GEF), while inactivation through hydrolysis of bound GTP is catalyzed by a GTPase activating protein (GAP). Its function is as follows. Ypt/Rab-type GTPases are key regulators of membrane trafficking and intracellular vesicular transport. They act as molecular switches that convert between GTP-bound and GDP-bound states, and regulate virtually all steps of membrane traffic from the formation of the transport vesicle at the donor membrane to its fusion at the target membrane. In the GDP-bound state, Ypt proteins are predominantly cytosolic, solubilized through the interaction with a GDP dissociation inhibitor (GDI). In the GTP-bound state, the proteins are membrane bound and interact with specific effector proteins that select cargo, promote vesicle movement, or verify the correct site of fusion. Required for fungal morphogenesis, vacuole fusion, autophagy, stress resistance and pathogenicity. The sequence is that of Ypt/Rab-type GTPase ypt7 from Pyricularia oryzae (strain 70-15 / ATCC MYA-4617 / FGSC 8958) (Rice blast fungus).